A 342-amino-acid polypeptide reads, in one-letter code: Serpentine receptor class beta-16 (342 aa).

The Extracellular portion of the chain corresponds to 1-22 (MDRELIEICKENSATAFSVGYQ). The helical transmembrane segment at 23–43 (IVYLIYVVLSVTSIFTCSYFI) threads the bilayer. Residues 44–61 (KTFIWNSTFHPNFKLLLT) lie on the Cytoplasmic side of the membrane. A helical transmembrane segment spans residues 62–82 (MYFFAAIFHSFLFTASYLMMI). At 83 to 102 (ERFLDYQTDCDIHVSMVPYA) the chain is on the extracellular side. The helical transmembrane segment at 103–123 (IVHSSIACCLFCGMLTQVFMV) threads the bilayer. At 124–141 (IERLLATIKIESYEHNTS) the chain is on the cytoplasmic side. A helical membrane pass occupies residues 142–162 (FWHILAYLFFCIVLPLSLLVW). Topologically, residues 163–187 (AYQDADYNSPVITAISPPKGVEIRL) are extracellular. Residues 188 to 208 (NILYIFCFFLAILALILLQVV) traverse the membrane as a helical segment. Residues 209-237 (RFVNKRRESRIEISLSGRFQIVENIDTTT) are Cytoplasmic-facing. Residues 238–258 (FISSILIINMIMSVIYIVGTF) traverse the membrane as a helical segment. Residues 259–274 (TLRNFQFDAFINNQPA) lie on the Extracellular side of the membrane. The chain crosses the membrane as a helical span at residues 275–295 (LATVKTIFYLHPLFSFLMPLI). Residues 296-342 (SSYHLSKMRERRVKRREHLMAIKTKGREGSDAYNQLLHDQWTQHFLK) lie on the Cytoplasmic side of the membrane.

The protein belongs to the nematode receptor-like protein srb family. Expressed throughout the nervous system, in pharyngeal muscle, hermaphrodite vulval muscles and in the male tail. Not expressed in male somatic gonads or sperm.

Its subcellular location is the cell membrane. The protein resides in the perikaryon. It localises to the cell projection. The protein localises to the dendrite. In terms of biological role, G-protein coupled receptor. Plays a role in the navigational capacity of sperm and promotes the targeting of sperm derived from males to the fertilization site in the uterus of hermaphrodites. This is Serpentine receptor class beta-16 from Caenorhabditis elegans.